Consider the following 105-residue polypeptide: UPF0235 protein A1G_07140 (105 aa).

Belongs to the UPF0235 family.

The polypeptide is UPF0235 protein A1G_07140 (Rickettsia rickettsii (strain Sheila Smith)).